The chain runs to 68 residues: uncharacterized protein (68 aa).

Transmembrane regions (helical) follow at residues 1–21 (MLFI…YFLP) and 28–48 (VHFS…LSSV).

It localises to the cell membrane. This is an uncharacterized protein from Haemophilus influenzae (strain ATCC 51907 / DSM 11121 / KW20 / Rd).